The primary structure comprises 414 residues: Succinylornithine transaminase (414 aa).

The residue at position 260 (K260) is an N6-(pyridoxal phosphate)lysine.

Belongs to the class-III pyridoxal-phosphate-dependent aminotransferase family. AstC subfamily. It depends on pyridoxal 5'-phosphate as a cofactor.

It catalyses the reaction N(2)-succinyl-L-ornithine + 2-oxoglutarate = N-succinyl-L-glutamate 5-semialdehyde + L-glutamate. It functions in the pathway amino-acid degradation; L-arginine degradation via AST pathway; L-glutamate and succinate from L-arginine: step 3/5. In terms of biological role, catalyzes the transamination of N(2)-succinylornithine and alpha-ketoglutarate into N(2)-succinylglutamate semialdehyde and glutamate. Can also act as an acetylornithine aminotransferase. In Yersinia pestis bv. Antiqua (strain Antiqua), this protein is Succinylornithine transaminase.